The chain runs to 139 residues: Spermatogenesis-associated protein 33 (139 aa).

The segment at 1-67 is interaction with ATG16L1; sequence MVTHAAGART…TAKHPPPAAS (67 aa). Positions 1-83 are disordered; that stretch reads MVTHAAGART…VKQKSSRKKV (83 aa). Residues 25 to 50 show a composition bias toward basic and acidic residues; that stretch reads KSKEKLMEKHSQEARQADRESEKPVD. The interaction with VDAC2 stretch occupies residues 68–139; that stretch reads LEEKPDVKQK…ADAYNSHLKE (72 aa). A PQIIIT motif is present at residues 86-91; the sequence is PQIIIT. At serine 94 the chain carries Phosphoserine. Over residues 97–109 the composition is skewed to polar residues; sequence TLVSCSSSGSDQQ. The disordered stretch occupies residues 97–139; it reads TLVSCSSSGSDQQRTIREPEDWGPYRRHRNPSTADAYNSHLKE. The span at 110–120 shows a compositional bias: basic and acidic residues; sequence RTIREPEDWGP.

In terms of assembly, interacts (via PQIIIT motif) with PPP3R1, PPP3R2, PPP3CA, PPP3CB and PPP3CC. Interacts with VDAC2. Interacts with ATG16L1 (via WD repeats).

The protein localises to the cytoplasm. It localises to the cytosol. It is found in the nucleus. Its subcellular location is the mitochondrion. Functionally, plays an important role in sperm motility and male fertility. Required for sperm midpiece flexibility and for the localization of sperm calcineurin to the mitochondria. Promotes mitophagy as well as acts as an autophagy mediator in male germline cells. Links damaged mitochondria to autophagosomes via its binding to the outer mitochondrial membrane protein VDAC2, as well as to key autophagy machinery component ATG16L1. This is Spermatogenesis-associated protein 33 (SPATA33) from Homo sapiens (Human).